We begin with the raw amino-acid sequence, 138 residues long: Small ribosomal subunit protein uS11c (138 aa).

The protein belongs to the universal ribosomal protein uS11 family. Part of the 30S ribosomal subunit.

Its subcellular location is the plastid. The polypeptide is Small ribosomal subunit protein uS11c (Cuscuta obtusiflora (Peruvian dodder)).